Here is a 599-residue protein sequence, read N- to C-terminus: Elongation factor 4 (599 aa).

Residues 4 to 186 form the tr-type G domain; it reads EHIRNFSIIA…EIVKKIPPPQ (183 aa). Residues 16–21 and 133–136 each bind GTP; these read DHGKST and NKID.

The protein belongs to the TRAFAC class translation factor GTPase superfamily. Classic translation factor GTPase family. LepA subfamily.

The protein resides in the cell inner membrane. The catalysed reaction is GTP + H2O = GDP + phosphate + H(+). In terms of biological role, required for accurate and efficient protein synthesis under certain stress conditions. May act as a fidelity factor of the translation reaction, by catalyzing a one-codon backward translocation of tRNAs on improperly translocated ribosomes. Back-translocation proceeds from a post-translocation (POST) complex to a pre-translocation (PRE) complex, thus giving elongation factor G a second chance to translocate the tRNAs correctly. Binds to ribosomes in a GTP-dependent manner. The protein is Elongation factor 4 of Geobacter sp. (strain M21).